A 965-amino-acid chain; its full sequence is Kinesin-like protein KIN-7K, chloroplastic (965 aa).

The interval 1 to 69 (MASRQGSKSR…PQTAQRSKEN (69 aa)) is disordered. Residues 19–28 (STASSTTSSS) show a composition bias toward low complexity. Polar residues predominate over residues 29-38 (KLYQETSIDG). Positions 40-56 (SSPASSSAQSKQQFFSP) are enriched in low complexity. One can recognise a Kinesin motor domain in the interval 69–388 (NVTVTVRFRP…LKFAHRAKHI (320 aa)). 149-156 (GVTSSGKT) contributes to the ATP binding site. Residues 389 to 483 (EIQAEQNKII…LTKLILVSTK (95 aa)) adopt a coiled-coil conformation. A compositionally biased stretch (basic residues) spans 551 to 561 (LLNWLKPKKRD). 2 disordered regions span residues 551–633 (LLNW…KMSD) and 842–888 (ATQK…ELRM). A compositionally biased stretch (low complexity) spans 564-577 (SSASDQSSVVKSNS). A compositionally biased stretch (basic and acidic residues) spans 606–623 (SEPREDREALEDSSHEME). Coiled coils occupy residues 628–703 (SNKM…FVMT) and 738–846 (NRII…TQKS). The span at 851-862 (RNKTGTTTNVRN) shows a compositional bias: low complexity. Residues 864–888 (GRRESLAKRQEHDSPSMELKRELRM) are compositionally biased toward basic and acidic residues. Positions 896–931 (YEAALGEKEQREAELERILEETKQREAYLENELANM) form a coiled coil. The tract at residues 942–965 (QGADSEISDSISETRQTEQTEGSF) is disordered. Polar residues predominate over residues 949-965 (SDSISETRQTEQTEGSF).

This sequence belongs to the TRAFAC class myosin-kinesin ATPase superfamily. Kinesin family. KIN-7 subfamily.

It is found in the plastid. Its subcellular location is the chloroplast. This Arabidopsis thaliana (Mouse-ear cress) protein is Kinesin-like protein KIN-7K, chloroplastic.